Here is a 92-residue protein sequence, read N- to C-terminus: Small ribosomal subunit protein uS19c (92 aa).

This sequence belongs to the universal ribosomal protein uS19 family.

It is found in the plastid. The protein localises to the chloroplast. Its function is as follows. Protein S19 forms a complex with S13 that binds strongly to the 16S ribosomal RNA. This is Small ribosomal subunit protein uS19c from Oedogonium cardiacum (Filamentous green alga).